The following is a 481-amino-acid chain: Inosine-5'-monophosphate dehydrogenase (481 aa).

CBS domains lie at 92 to 148 (VIND…SKKV) and 152 to 209 (MTKM…PEAN). NAD(+) is bound by residues D244 and 293–295 (GIG). K(+) contacts are provided by G295 and G297. S298 is an IMP binding site. Residue C300 coordinates K(+). The active-site Thioimidate intermediate is the C300. IMP is bound by residues 333–335 (DGG), 356–357 (GS), and 380–384 (YRGMG). Residue R396 is the Proton acceptor of the active site. IMP is bound at residue E410. The K(+) site is built by E464, S465, and H466.

The protein belongs to the IMPDH/GMPR family. Homotetramer. It depends on K(+) as a cofactor.

It carries out the reaction IMP + NAD(+) + H2O = XMP + NADH + H(+). It functions in the pathway purine metabolism; XMP biosynthesis via de novo pathway; XMP from IMP: step 1/1. With respect to regulation, mycophenolic acid (MPA) is a non-competitive inhibitor that prevents formation of the closed enzyme conformation by binding to the same site as the amobile flap. In contrast, mizoribine monophosphate (MZP) is a competitive inhibitor that induces the closed conformation. MPA is a potent inhibitor of mammalian IMPDHs but a poor inhibitor of the bacterial enzymes. MZP is a more potent inhibitor of bacterial IMPDH. Functionally, catalyzes the conversion of inosine 5'-phosphate (IMP) to xanthosine 5'-phosphate (XMP), the first committed and rate-limiting step in the de novo synthesis of guanine nucleotides, and therefore plays an important role in the regulation of cell growth. This chain is Inosine-5'-monophosphate dehydrogenase, found in Helicobacter pylori (strain ATCC 700392 / 26695) (Campylobacter pylori).